The chain runs to 240 residues: Sialidase 85-1.2 (240 aa).

The span at 127–142 shows a compositional bias: acidic residues; the sequence is DDDDGGDDDDEEDSQE. Disordered stretches follow at residues 127–158 and 221–240; these read DDDD…GKKP and HRGG…QRDA. A compositionally biased stretch (basic and acidic residues) spans 144–155; it reads SSPKESSPEKIG.

The protein belongs to the glycosyl hydrolase 33 family.

It catalyses the reaction Hydrolysis of alpha-(2-&gt;3)-, alpha-(2-&gt;6)-, alpha-(2-&gt;8)- glycosidic linkages of terminal sialic acid residues in oligosaccharides, glycoproteins, glycolipids, colominic acid and synthetic substrates.. Developmentally regulated neuraminidase implicated in parasite invasion of cells. May contribute to the pathology during T.cruzi infection by cleaving sialic acid from cells of the immune system. This chain is Sialidase 85-1.2 (SA85-1.2), found in Trypanosoma cruzi.